Here is a 155-residue protein sequence, read N- to C-terminus: 3-hydroxyacyl-[acyl-carrier-protein] dehydratase FabZ (155 aa).

His57 is a catalytic residue.

It belongs to the thioester dehydratase family. FabZ subfamily.

The protein resides in the cytoplasm. It carries out the reaction a (3R)-hydroxyacyl-[ACP] = a (2E)-enoyl-[ACP] + H2O. In terms of biological role, involved in unsaturated fatty acids biosynthesis. Catalyzes the dehydration of short chain beta-hydroxyacyl-ACPs and long chain saturated and unsaturated beta-hydroxyacyl-ACPs. The polypeptide is 3-hydroxyacyl-[acyl-carrier-protein] dehydratase FabZ (Cereibacter sphaeroides (strain KD131 / KCTC 12085) (Rhodobacter sphaeroides)).